A 501-amino-acid chain; its full sequence is MNTMSHKFVLALDEGTTSARAILFDSDLNIVNIGQYEFPQHYPQPGYVEHDPEEIWEAQMLAVKKAISKIDAKQIVAIGITNQRETTVLWDAKSGKPVYNAIVWQDRRTSPITDWLKANYFKMIKDKTGLVPDPYFSASKIKWILDNVSNVREKAERGEIKFGTIDTYLIWRLTNGKAHVTDYSNASRTMLFNINKLEWDREILELLKIPESILPEVKPSSEIYGYSEALGNLIPISGDAGDQQAALFGQVAFNVGEIKATYGTGSFILMNIGNNPIRSENLLTTIAWGLEKNKAKYALEGSIFITGAAVQWFRDGLRAIDVSDEIEPLASSVEDNGGVYFVPAFVGLGAPYWDPYARGLIIGITRGTTKAHIARAILESMAYQTRDVIEVMQKESSISINSLKVDGGAAKDNLLMQFQADIIGIKVIRPKVMETTSMGVAMLAGLGVGLWNSLEELRSIWKVDKEFIPSMSEEKRRALYSGWKEAVKRAMGWAKVVGGQV.

Residue threonine 16 participates in ADP binding. ATP contacts are provided by threonine 16, threonine 17, and serine 18. Threonine 16 lines the sn-glycerol 3-phosphate pocket. Residue arginine 20 coordinates ADP. 4 residues coordinate sn-glycerol 3-phosphate: arginine 84, glutamate 85, tyrosine 135, and aspartate 242. Glycerol contacts are provided by arginine 84, glutamate 85, tyrosine 135, aspartate 242, and glutamine 243. ADP is bound by residues threonine 264 and glycine 307. ATP contacts are provided by threonine 264, glycine 307, glutamine 311, and glycine 408. Position 408 (glycine 408) interacts with ADP.

It belongs to the FGGY kinase family.

It carries out the reaction glycerol + ATP = sn-glycerol 3-phosphate + ADP + H(+). The protein operates within polyol metabolism; glycerol degradation via glycerol kinase pathway; sn-glycerol 3-phosphate from glycerol: step 1/1. Key enzyme in the regulation of glycerol uptake and metabolism. Catalyzes the phosphorylation of glycerol to yield sn-glycerol 3-phosphate. The sequence is that of Glycerol kinase from Saccharolobus islandicus (strain M.16.27) (Sulfolobus islandicus).